The sequence spans 254 residues: Imidazole glycerol phosphate synthase subunit HisF (254 aa).

Residues aspartate 11 and aspartate 130 contribute to the active site.

The protein belongs to the HisA/HisF family. As to quaternary structure, heterodimer of HisH and HisF.

The protein localises to the cytoplasm. It carries out the reaction 5-[(5-phospho-1-deoxy-D-ribulos-1-ylimino)methylamino]-1-(5-phospho-beta-D-ribosyl)imidazole-4-carboxamide + L-glutamine = D-erythro-1-(imidazol-4-yl)glycerol 3-phosphate + 5-amino-1-(5-phospho-beta-D-ribosyl)imidazole-4-carboxamide + L-glutamate + H(+). It functions in the pathway amino-acid biosynthesis; L-histidine biosynthesis; L-histidine from 5-phospho-alpha-D-ribose 1-diphosphate: step 5/9. Its function is as follows. IGPS catalyzes the conversion of PRFAR and glutamine to IGP, AICAR and glutamate. The HisF subunit catalyzes the cyclization activity that produces IGP and AICAR from PRFAR using the ammonia provided by the HisH subunit. The protein is Imidazole glycerol phosphate synthase subunit HisF of Chromobacterium violaceum (strain ATCC 12472 / DSM 30191 / JCM 1249 / CCUG 213 / NBRC 12614 / NCIMB 9131 / NCTC 9757 / MK).